The sequence spans 87 residues: Potassium channel toxin Tdi-beta-KTx (87 aa).

Positions 1-19 (MERKLALLLLLGMITLASS) are cleaved as a signal peptide. Positions 20 to 27 (GLREKHVQ) are excised as a propeptide. The region spanning 53 to 87 (QFGCPAYEGYCMNHCQDIERHDGSCHGFKCKCEKS) is the BetaSPN-type CS-alpha/beta domain. Cystine bridges form between Cys-56-Cys-77, Cys-63-Cys-82, and Cys-67-Cys-84.

In terms of tissue distribution, expressed by the venom gland.

The protein localises to the secreted. Its function is as follows. Inhibits voltage-gated potassium channel. The protein is Potassium channel toxin Tdi-beta-KTx of Tityus discrepans (Venezuelan scorpion).